The sequence spans 200 residues: Cytochrome c biogenesis ATP-binding export protein CcmA (200 aa).

In terms of domain architecture, ABC transporter spans 2-200 (LDVIELDFDY…NKADYEEYHL (199 aa)). 34 to 41 (GSNGAGKT) serves as a coordination point for ATP.

Belongs to the ABC transporter superfamily. CcmA exporter (TC 3.A.1.107) family. As to quaternary structure, the complex is composed of two ATP-binding proteins (CcmA) and two transmembrane proteins (CcmB).

Its subcellular location is the cell inner membrane. It carries out the reaction heme b(in) + ATP + H2O = heme b(out) + ADP + phosphate + H(+). Its function is as follows. Part of the ABC transporter complex CcmAB involved in the biogenesis of c-type cytochromes; once thought to export heme, this seems not to be the case, but its exact role is uncertain. Responsible for energy coupling to the transport system. In Legionella pneumophila (strain Paris), this protein is Cytochrome c biogenesis ATP-binding export protein CcmA.